Consider the following 448-residue polypeptide: ATP-dependent RNA helicase sub2 (448 aa).

Residues 19-29 (DAAATTAAPAA) show a composition bias toward low complexity. Residues 19–43 (DAAATTAAPAANGAQDKKGDLTVSG) are disordered. The short motif at 58-86 (TGFRDFLLKGELLRAITDCGFEHPSEVQQ) is the Q motif element. Residues 89 to 271 (IPTAILNVDV…KKFMRNPLEV (183 aa)) form the Helicase ATP-binding domain. Position 102 to 109 (102 to 109 (AKSGLGKT)) interacts with ATP. The short motif at 211–214 (DECD) is the DECD box element. The Helicase C-terminal domain occupies 283 to 444 (GLQQYYIKLS…EYPEGGVDSS (162 aa)).

The protein belongs to the DEAD box helicase family. DECD subfamily.

It localises to the nucleus. The enzyme catalyses ATP + H2O = ADP + phosphate + H(+). Functionally, ATP-binding RNA helicase involved in transcription elongation and required for the export of mRNA out of the nucleus. SUB2 also plays a role in pre-mRNA splicing and spliceosome assembly. May be involved in rDNA and telomeric silencing, and maintenance of genome integrity. This Aspergillus fumigatus (strain ATCC MYA-4609 / CBS 101355 / FGSC A1100 / Af293) (Neosartorya fumigata) protein is ATP-dependent RNA helicase sub2 (sub2).